A 220-amino-acid chain; its full sequence is NADH-quinone oxidoreductase subunit I (220 aa).

4Fe-4S ferredoxin-type domains are found at residues 71–102 (LQRLLDSGSERCIGCGLCEKICTSNCIRIITH) and 112–141 (DSYTINLGRCIYCGLCAEVCPELAIVMGNR). [4Fe-4S] cluster-binding residues include cysteine 82, cysteine 85, cysteine 88, cysteine 92, cysteine 121, cysteine 124, cysteine 127, and cysteine 131. Residues 187–220 (MQATPLDYVQEPSKEESQEETPTNPESNKGDENV) are disordered.

The protein belongs to the complex I 23 kDa subunit family. In terms of assembly, NDH-1 is composed of 14 different subunits. Subunits NuoA, H, J, K, L, M, N constitute the membrane sector of the complex. [4Fe-4S] cluster serves as cofactor.

The protein resides in the cell inner membrane. It catalyses the reaction a quinone + NADH + 5 H(+)(in) = a quinol + NAD(+) + 4 H(+)(out). Its function is as follows. NDH-1 shuttles electrons from NADH, via FMN and iron-sulfur (Fe-S) centers, to quinones in the respiratory chain. The immediate electron acceptor for the enzyme in this species is believed to be ubiquinone. Couples the redox reaction to proton translocation (for every two electrons transferred, four hydrogen ions are translocated across the cytoplasmic membrane), and thus conserves the redox energy in a proton gradient. The protein is NADH-quinone oxidoreductase subunit I of Helicobacter pylori (strain ATCC 700392 / 26695) (Campylobacter pylori).